Reading from the N-terminus, the 289-residue chain is Protoheme IX farnesyltransferase 2 (289 aa).

The next 9 membrane-spanning stretches (helical) occupy residues leucine 13 to serine 33, isoleucine 37 to phenylalanine 57, leucine 86 to leucine 106, valine 109 to leucine 129, isoleucine 137 to glycine 157, valine 159 to tryptophan 179, glutamate 207 to isoleucine 227, valine 232 to alanine 252, and alanine 267 to valine 287.

This sequence belongs to the UbiA prenyltransferase family. Protoheme IX farnesyltransferase subfamily.

It localises to the cell membrane. The enzyme catalyses heme b + (2E,6E)-farnesyl diphosphate + H2O = Fe(II)-heme o + diphosphate. Its pathway is porphyrin-containing compound metabolism; heme O biosynthesis; heme O from protoheme: step 1/1. In terms of biological role, converts heme B (protoheme IX) to heme O by substitution of the vinyl group on carbon 2 of heme B porphyrin ring with a hydroxyethyl farnesyl side group. The polypeptide is Protoheme IX farnesyltransferase 2 (Picrophilus torridus (strain ATCC 700027 / DSM 9790 / JCM 10055 / NBRC 100828 / KAW 2/3)).